The following is a 386-amino-acid chain: MATTKSFLILIVMILATTSSTFASLEEMVTVLSIDGGGIKGIIPGTILEFLEGQLQKMDNNADARLADYFDVIGGTSTGGLLTAMITTPNENNRPFAAANEIVPFYFEHGPHIFNSSTGQFFRKYDGKYLMQVLQEKLGETRVHQALTEVAISSFDIKTNKPVIFTKSNLAKSPELDAKMYDICYSTAAAPTYFPPHYFATNTINGDKYELNLVDGAVATVADPALLSVSVATRRAQEDPAFASIRSLNYKKMLLLSLGTGTTSEFDKTHTAEETAKWGALQWMLVIQQMTEAASSYMTDYYLSTVFQDLHSQNNYLRVQENPLTGTTTKADDASEANMELLAQVGENLLKKPVSKDNPETYEEALKRFAKLLSDRKKLRANKASY.

Positions 1–23 (MATTKSFLILIVMILATTSSTFA) are cleaved as a signal peptide. Positions 32–229 (LSIDGGGIKG…TVADPALLSV (198 aa)) constitute a PNPLA domain. Positions 36–41 (GGGIKG) match the GXGXXG motif. The short motif at 75 to 79 (GTSTG) is the GXSXG element. Ser77 (nucleophile) is an active-site residue. Residue Asn115 is glycosylated (N-linked (GlcNAc...) asparagine). Asp215 (proton acceptor) is an active-site residue. The DGA/G motif lies at 215–217 (DGA). A coiled-coil region spans residues 360–384 (ETYEEALKRFAKLLSDRKKLRANKA).

This sequence belongs to the patatin family.

It localises to the vacuole. Probable lipolytic acyl hydrolase (LAH), an activity which is thought to be involved in the response of tubers to pathogens. This is Patatin-16 from Solanum tuberosum (Potato).